Reading from the N-terminus, the 258-residue chain is Deoxyribose-phosphate aldolase (258 aa).

The active-site Proton donor/acceptor is D102. Residue K165 is the Schiff-base intermediate with acetaldehyde of the active site. K199 acts as the Proton donor/acceptor in catalysis.

It belongs to the DeoC/FbaB aldolase family. DeoC type 2 subfamily.

The protein resides in the cytoplasm. The catalysed reaction is 2-deoxy-D-ribose 5-phosphate = D-glyceraldehyde 3-phosphate + acetaldehyde. It functions in the pathway carbohydrate degradation; 2-deoxy-D-ribose 1-phosphate degradation; D-glyceraldehyde 3-phosphate and acetaldehyde from 2-deoxy-alpha-D-ribose 1-phosphate: step 2/2. Functionally, catalyzes a reversible aldol reaction between acetaldehyde and D-glyceraldehyde 3-phosphate to generate 2-deoxy-D-ribose 5-phosphate. The chain is Deoxyribose-phosphate aldolase from Vibrio vulnificus (strain CMCP6).